Here is a 711-residue protein sequence, read N- to C-terminus: MND1-interacting protein 1 (711 aa).

Residues 390–648 are a coiled coil; that stretch reads EWAQKNAMQA…LEGSYDNEAN (259 aa). Disordered stretches follow at residues 552–571 and 602–622; these read EALA…EGHN and RLKA…WKPK. The span at 602–611 shows a compositional bias: basic and acidic residues; that stretch reads RLKASSDSDS. Residues 653–697 form an RING-type zinc finger; sequence CIICMKDEVSVVFLPCAHQVVCGSCSDSFFASNNGGSKVTCPCCR.

In terms of assembly, interacts (via C-terminal domain) with MND1 and HOP2. Interacts with XRI1 (via C-terminal domain).

The sequence is that of MND1-interacting protein 1 (MIP1) from Arabidopsis thaliana (Mouse-ear cress).